Consider the following 219-residue polypeptide: Protein OPG170 (219 aa).

Positions 1-16 (MYSLLFIILMCIPFSF) are cleaved as a signal peptide. Asn70 carries N-linked (GlcNAc...) asparagine; by host glycosylation.

This sequence belongs to the orthopoxvirus OPG170 family.

It localises to the secreted. May interact with several cellular chemokines to interfere with chemokine-glycosaminoglycan (GAG) interactions at the cell surface to alter chemotaxis of nearby responsive cells. This is Protein OPG170 (OPG170) from Vaccinia virus (strain Copenhagen) (VACV).